The primary structure comprises 76 residues: ATP synthase subunit 9, mitochondrial (76 aa).

The next 2 helical transmembrane spans lie at 14 to 34 (ISTIGTLGAGIGIAIVFAALI) and 48 to 68 (FPFAITGFALSEATGLFCLMV).

This sequence belongs to the ATPase C chain family. As to quaternary structure, F-type ATPases have 2 components, CF(1) - the catalytic core - and CF(0) - the membrane proton channel. CF(1) has five subunits: alpha(3), beta(3), gamma(1), delta(1), epsilon(1). CF(0) has three main subunits: a, b and c.

The protein resides in the mitochondrion membrane. Functionally, mitochondrial membrane ATP synthase (F(1)F(0) ATP synthase or Complex V) produces ATP from ADP in the presence of a proton gradient across the membrane which is generated by electron transport complexes of the respiratory chain. F-type ATPases consist of two structural domains, F(1) - containing the extramembraneous catalytic core and F(0) - containing the membrane proton channel, linked together by a central stalk and a peripheral stalk. During catalysis, ATP synthesis in the catalytic domain of F(1) is coupled via a rotary mechanism of the central stalk subunits to proton translocation. Part of the complex F(0) domain. A homomeric c-ring of probably 10 subunits is part of the complex rotary element. This chain is ATP synthase subunit 9, mitochondrial (ATP9), found in Cyberlindnera mrakii (Yeast).